The chain runs to 97 residues: Carboxysome shell protein CsoS1B (97 aa).

One can recognise a BMC domain in the interval 8 to 93 (ALGMIETRGL…PHKEVEPVLT (86 aa)).

Belongs to the bacterial microcompartments protein family. CsoS1 subfamily. Homohexamer with a small central pore.

It is found in the carboxysome. Functionally, one of shell proteins of the carboxysome, a polyhedral inclusion where RuBisCO (ribulose bisphosphate carboxylase, ccbL-ccbS) is sequestered. Assembles into hexamers which make sheets that form the facets of the polyhedral carboxysome. The shell probably limits the diffusion of CO(2) into and out of the carboxysome. The polypeptide is Carboxysome shell protein CsoS1B (Hydrogenovibrio crunogenus (strain DSM 25203 / XCL-2) (Thiomicrospira crunogena)).